The primary structure comprises 221 residues: Probable N-acetyl-alpha-D-glucosaminyl L-malate deacetylase 2 (221 aa).

Residues H11, D14, and H125 each contribute to the Zn(2+) site.

The protein belongs to the PIGL family. The cofactor is Zn(2+).

It catalyses the reaction (S)-malyl N-acetyl-alpha-D-glucosaminide + H2O = (S)-malyl alpha-D-glucosaminide + acetate. Functionally, involved in bacillithiol (BSH) biosynthesis. Catalyzes the second step of the pathway, the deacetylation of N-acetylglucosaminylmalate (GlcNAc-Mal) to glucosamine malate (GlcN-Mal). In Bacillus subtilis (strain 168), this protein is Probable N-acetyl-alpha-D-glucosaminyl L-malate deacetylase 2.